We begin with the raw amino-acid sequence, 179 residues long: GTP-dependent dephospho-CoA kinase (179 aa).

The GTP site is built by Asp-49, Val-50, Val-51, Asp-68, Lys-70, and Glu-126.

It belongs to the GTP-dependent DPCK family.

It carries out the reaction 3'-dephospho-CoA + GTP = GDP + CoA + H(+). It participates in cofactor biosynthesis; coenzyme A biosynthesis. Its function is as follows. Catalyzes the GTP-dependent phosphorylation of the 3'-hydroxyl group of dephosphocoenzyme A to form coenzyme A (CoA). This chain is GTP-dependent dephospho-CoA kinase, found in Pyrococcus abyssi (strain GE5 / Orsay).